We begin with the raw amino-acid sequence, 151 residues long: Deoxyuridine 5'-triphosphate nucleotidohydrolase (151 aa).

Substrate is bound by residues 70–72, Asn-83, 87–89, and Met-97; these read RSG and LID.

This sequence belongs to the dUTPase family. Mg(2+) is required as a cofactor.

It carries out the reaction dUTP + H2O = dUMP + diphosphate + H(+). Its pathway is pyrimidine metabolism; dUMP biosynthesis; dUMP from dCTP (dUTP route): step 2/2. This enzyme is involved in nucleotide metabolism: it produces dUMP, the immediate precursor of thymidine nucleotides and it decreases the intracellular concentration of dUTP so that uracil cannot be incorporated into DNA. This is Deoxyuridine 5'-triphosphate nucleotidohydrolase from Actinobacillus pleuropneumoniae serotype 7 (strain AP76).